The following is a 220-amino-acid chain: ATP-dependent dethiobiotin synthetase BioD (220 aa).

13 to 18 (EVGKTV) lines the ATP pocket. Thr-17 lines the Mg(2+) pocket. Lys-38 is an active-site residue. Ser-42 contacts substrate. Residues Asp-55, 116–119 (EGAG), 176–177 (NR), and Asn-212 each bind ATP. Residues Asp-55 and Glu-116 each coordinate Mg(2+).

It belongs to the dethiobiotin synthetase family. As to quaternary structure, homodimer. Mg(2+) serves as cofactor.

It is found in the cytoplasm. It catalyses the reaction (7R,8S)-7,8-diammoniononanoate + CO2 + ATP = (4R,5S)-dethiobiotin + ADP + phosphate + 3 H(+). The protein operates within cofactor biosynthesis; biotin biosynthesis; biotin from 7,8-diaminononanoate: step 1/2. Catalyzes a mechanistically unusual reaction, the ATP-dependent insertion of CO2 between the N7 and N8 nitrogen atoms of 7,8-diaminopelargonic acid (DAPA, also called 7,8-diammoniononanoate) to form a ureido ring. The protein is ATP-dependent dethiobiotin synthetase BioD of Photobacterium profundum (strain SS9).